The following is a 249-amino-acid chain: Cysteine desulfuration protein SufE (249 aa).

Catalysis depends on C154, which acts as the Cysteine persulfide intermediate.

This sequence belongs to the SufE family. Monomer. Interacts with SufS; interaction enhances cysteine desulfurase activity of SufS. Proteolytically cleaved.

It localises to the plastid. It is found in the apicoplast. It functions in the pathway cofactor biosynthesis; iron-sulfur cluster biosynthesis. Participates in sulfur mobilization (SUF) pathway for iron-sulfur (Fe-S) cluster biogenesis. Enhances cysteine desulfurase activity of SufS. Probably functions as a sulfur acceptor for SufS. This is Cysteine desulfuration protein SufE from Plasmodium falciparum (isolate 3D7).